Here is an 869-residue protein sequence, read N- to C-terminus: Probable inorganic carbon transporter subunit DabA (869 aa).

The tract at residues 1–32 (MSTATLEQRAKRGEAPRANDAGHCAHPADGAR) is disordered. A compositionally biased stretch (basic and acidic residues) spans 8-17 (QRAKRGEAPR). The Zn(2+) site is built by cysteine 376, aspartate 378, histidine 555, and cysteine 570.

This sequence belongs to the inorganic carbon transporter (TC 9.A.2) DabA family. As to quaternary structure, forms a complex with DabB. Requires Zn(2+) as cofactor.

The protein localises to the cell inner membrane. In terms of biological role, part of an energy-coupled inorganic carbon pump. This is Probable inorganic carbon transporter subunit DabA from Burkholderia multivorans (strain ATCC 17616 / 249).